A 175-amino-acid polypeptide reads, in one-letter code: Protein her-1 (175 aa).

An N-terminal signal peptide occupies residues 1–18 (MRYLPIFVFLGSFGYTET). N-linked (GlcNAc...) asparagine glycans are attached at residues N98 and N163.

It is found in the secreted. Dictates male development. Probably plays a direct role in cell signaling during C.elegans sex determination. Inhibits the function of tra-2a. This is Protein her-1 (her-1) from Caenorhabditis elegans.